Consider the following 357-residue polypeptide: F-box only protein 25 (357 aa).

Residues 1 to 83 (MPFLGQDWRS…NDTNTQCFYR (83 aa)) form an interaction with beta-actin region. Residues 225 to 273 (LTLSDLPVHMLSNILYRFSDGWDIVTLGQVTPTLSALSEDRQLWKKLCQ) enclose the F-box domain.

As to quaternary structure, part of a SCF (SKP1-cullin-F-box) protein ligase complex consisting of FBXO25, SKP1, CUL1 and RBX1. Interacts directly with SKP1 and CUL1. Interacts (via C-terminus) with beta-actin (via N-terminus).

It is found in the nucleus. It functions in the pathway protein modification; protein ubiquitination. In terms of biological role, substrate-recognition component of the SCF (SKP1-CUL1-F-box protein)-type E3 ubiquitin ligase complex. May play a role in accumulation of expanded polyglutamine (polyQ) protein huntingtin (HTT). The protein is F-box only protein 25 (FBXO25) of Bos taurus (Bovine).